Consider the following 657-residue polypeptide: uncharacterized protein (657 aa).

Ser114 carries the phosphoserine modification. 5 disordered regions span residues 142-216, 228-248, 291-312, 335-354, and 399-522; these read LASQ…SDEE, SSREKNTNQGFSSANVSEEEE, STRSRADYPQSHVSSDTASHTP, SSPGRSEAETVDEPVSEGAD, and AEAS…SGRH. A compositionally biased stretch (polar residues) spans 143-169; sequence ASQNTDKTSQNQARELPVTENNAQNAK. Residues 190–206 are compositionally biased toward basic and acidic residues; sequence AGKERTLQTPKQKEPAR. The residue at position 213 (Ser213) is a Phosphoserine. Polar residues-rich tracts occupy residues 234–243 and 301–312; these read TNQGFSSANV and SHVSSDTASHTP. Over residues 343 to 354 the composition is skewed to acidic residues; the sequence is ETVDEPVSEGAD. The segment covering 437 to 451 has biased composition (low complexity); it reads SASSASAIQQDSTSS. The span at 462–484 shows a compositional bias: polar residues; sequence NTVSSAYSEDFENSPSLTASEPT. Residues 485–495 show a composition bias toward basic and acidic residues; that stretch reads AHSKESLDRTL. The segment covering 499–513 has biased composition (polar residues); that stretch reads SESSSSVKTDLPQTA.

This is an uncharacterized protein from Homo sapiens (Human).